Here is a 64-residue protein sequence, read N- to C-terminus: Large ribosomal subunit protein bL28 (64 aa).

This sequence belongs to the bacterial ribosomal protein bL28 family.

The polypeptide is Large ribosomal subunit protein bL28 (Campylobacter lari (strain RM2100 / D67 / ATCC BAA-1060)).